The sequence spans 306 residues: D-alanine--D-alanine ligase (306 aa).

Residues 101–303 (KLVWQALGLP…FSQLVARILM (203 aa)) form the ATP-grasp domain. 134–189 (VAKLGLPLIVKPSHEGSSVGMSKVDHASELQKALVEAFQHDSDVLIEKWLSGPEFT) lines the ATP pocket. 3 residues coordinate Mg(2+): Asp257, Glu270, and Asn272.

Belongs to the D-alanine--D-alanine ligase family. Mg(2+) is required as a cofactor. Mn(2+) serves as cofactor.

It is found in the cytoplasm. It carries out the reaction 2 D-alanine + ATP = D-alanyl-D-alanine + ADP + phosphate + H(+). The protein operates within cell wall biogenesis; peptidoglycan biosynthesis. Cell wall formation. This Yersinia pseudotuberculosis serotype O:1b (strain IP 31758) protein is D-alanine--D-alanine ligase.